Reading from the N-terminus, the 333-residue chain is Glycerol-3-phosphate dehydrogenase [NAD(P)+] (333 aa).

NADPH-binding residues include Trp13, Lys33, and Lys108. Residues Lys108 and Gly138 each coordinate sn-glycerol 3-phosphate. Ser142 contributes to the NADPH binding site. Positions 193, 246, 256, 257, and 258 each coordinate sn-glycerol 3-phosphate. The Proton acceptor role is filled by Lys193. Arg257 is an NADPH binding site. Residues Val281 and Glu283 each contribute to the NADPH site.

The protein belongs to the NAD-dependent glycerol-3-phosphate dehydrogenase family.

Its subcellular location is the cytoplasm. It carries out the reaction sn-glycerol 3-phosphate + NAD(+) = dihydroxyacetone phosphate + NADH + H(+). The catalysed reaction is sn-glycerol 3-phosphate + NADP(+) = dihydroxyacetone phosphate + NADPH + H(+). It participates in membrane lipid metabolism; glycerophospholipid metabolism. Catalyzes the reduction of the glycolytic intermediate dihydroxyacetone phosphate (DHAP) to sn-glycerol 3-phosphate (G3P), the key precursor for phospholipid synthesis. The sequence is that of Glycerol-3-phosphate dehydrogenase [NAD(P)+] from Bifidobacterium longum subsp. infantis (strain ATCC 15697 / DSM 20088 / JCM 1222 / NCTC 11817 / S12).